The primary structure comprises 261 residues: Transcription factor BEE 3 (261 aa).

The segment covering asparagine 72 to glutamine 82 has biased composition (low complexity). 2 disordered regions span residues asparagine 72–histidine 158 and valine 242–leucine 261. The segment covering valine 95–lysine 123 has biased composition (polar residues). Positions asparagine 135–histidine 146 are enriched in basic and acidic residues. One can recognise a bHLH domain in the interval glutamine 153 to leucine 203.

As to quaternary structure, homodimer. As to expression, expressed in stems.

The protein resides in the nucleus. In terms of biological role, positive regulator of brassinosteroid signaling. The polypeptide is Transcription factor BEE 3 (BEE3) (Arabidopsis thaliana (Mouse-ear cress)).